A 366-amino-acid polypeptide reads, in one-letter code: Apolipoprotein A-V (366 aa).

The signal sequence occupies residues 1 to 23 (MASMAAVLTWALALLSAFSATQA). Coiled-coil stretches lie at residues 54 to 157 (ATLK…VGED) and 236 to 262 (TLKA…RAFA). A Phosphothreonine; by FAM20C modification is found at Thr-55. Ser-59 bears the Phosphoserine mark.

The protein belongs to the apolipoprotein A1/A4/E family. Interacts with GPIHBP1. Interacts with SORL1; this interaction leads to APOA5 internalization and sorting either to lysosomes and degradation, or to the trans-Golgi network. In terms of processing, phosphorylated by FAM20C in the extracellular medium. As to expression, liver and plasma.

The protein localises to the secreted. It is found in the early endosome. It localises to the late endosome. Its subcellular location is the golgi apparatus. The protein resides in the trans-Golgi network. Minor apolipoprotein mainly associated with HDL and to a lesser extent with VLDL. May also be associated with chylomicrons. Important determinant of plasma triglyceride (TG) levels by both being a potent stimulator of apo-CII lipoprotein lipase (LPL) TG hydrolysis and an inhibitor of the hepatic VLDL-TG production rate (without affecting the VLDL-apoB production rate). Activates poorly lecithin:cholesterol acyltransferase (LCAT) and does not enhance efflux of cholesterol from macrophages. Binds heparin. The protein is Apolipoprotein A-V (APOA5) of Homo sapiens (Human).